The following is a 256-amino-acid chain: MKIITCYKCVPDEQDIAVNNADGSLDFSKADAKISQYDLNAIEAACQLKQQAAEGQVTALSVGGKALTNAKGRKDVLSRGPDELIVVIDDQFEQALPQQTASALAAAAQKAGFDLILCGDGSSDLYAQQVGLLVGEILNIPAVNGVSKIISLTADTLTVERELEDETETLSIPLPAVVAVSTDINSPQIPSMKAILGAAKKPVQVWSAADIGFNAEAAWSEQQVAAPKQRERQRIVIEGDGEEQIAAFAENLRKVI.

This sequence belongs to the ETF beta-subunit/FixA family. In terms of assembly, heterodimer of FixA and FixB.

It functions in the pathway amine and polyamine metabolism; carnitine metabolism. In terms of biological role, required for anaerobic carnitine reduction. May bring reductant to CaiA. The chain is Protein FixA from Escherichia coli O7:K1 (strain IAI39 / ExPEC).